Here is a 314-residue protein sequence, read N- to C-terminus: tRNA dimethylallyltransferase 1 (314 aa).

G17 to T24 is a binding site for ATP. T19–T24 provides a ligand contact to substrate. Positions D42–Q45 are interaction with substrate tRNA.

This sequence belongs to the IPP transferase family. In terms of assembly, monomer. Mg(2+) serves as cofactor.

The enzyme catalyses adenosine(37) in tRNA + dimethylallyl diphosphate = N(6)-dimethylallyladenosine(37) in tRNA + diphosphate. Its function is as follows. Catalyzes the transfer of a dimethylallyl group onto the adenine at position 37 in tRNAs that read codons beginning with uridine, leading to the formation of N6-(dimethylallyl)adenosine (i(6)A). This is tRNA dimethylallyltransferase 1 from Syntrophotalea carbinolica (strain DSM 2380 / NBRC 103641 / GraBd1) (Pelobacter carbinolicus).